We begin with the raw amino-acid sequence, 324 residues long: Aldo-keto reductase family 1 member C15 (324 aa).

NADP(+) is bound by residues 24-26 (TFA) and Asp-51. Tyr-56 serves as the catalytic Proton donor. His-118 contacts substrate. Residues 167 to 168 (SN), Gln-191, 217 to 225 (YSALGSHRD), and 269 to 281 (LAKS…IKEN) each bind NADP(+).

It belongs to the aldo/keto reductase family. Monomer. In terms of tissue distribution, expressed in lung, specifically in bronchiolar club cells, type II alveolar cells and epithelial cells of the duct of the bronchial gland (at protein level). Expressed in gastric parietal cells and in epithelial cells of the large intestine and colon (at protein level). Expressed in brown adipocytes (at protein level). Expressed in vascular endothelial cells (at protein level).

The protein localises to the cytoplasm. It catalyses the reaction (2E,6E)-farnesol + NADP(+) = (2E,6E)-farnesal + NADPH + H(+). Its activity is regulated as follows. The dehydrogenase activity is inhibited by 3',3'',5',5''-tetraiodophenolphthalein, phenolphthalein, genistein, quercetin, zearalenone and diethylstilbestrol. Its function is as follows. Catalyzes the NADPH-dependent reduction of a variety of substrates including aromatic and aliphatic aldehydes, quinones, ketones, dicarbonyl compounds and 17-ketosteroids. Catalyzes the NADP(+)-dependent oxidation of aromatic, alicyclic and aliphatic alcohols, and 17beta-hydroxysteroids. To a lesser extent, can also catalyze the reduction of some aldoses and ketoses and the oxidation of some sugar alcohols. In the stomach, lung and colon tissues, mediates the reduction of farnesal and geranylgeranial into farnesol and geranylgeraniol respectively. By reducing 4-hydroxy-2-nonenal (HNE), produced during lipid peroxidation, into 1,4-dihydro-2-nonene (DHN), protects vascular endothelial cells from damage elicited by oxidized lipoproteins. This chain is Aldo-keto reductase family 1 member C15, found in Rattus norvegicus (Rat).